Here is a 298-residue protein sequence, read N- to C-terminus: Thymidylate synthase (298 aa).

Residues Arg25 and 159–160 contribute to the dUMP site; that span reads RR. Catalysis depends on Cys179, which acts as the Nucleophile. Residues 200-203, Asn211, and 241-243 each bind dUMP; these read RSVD and HLY. Asp203 is a binding site for (6R)-5,10-methylene-5,6,7,8-tetrahydrofolate. Ala297 serves as a coordination point for (6R)-5,10-methylene-5,6,7,8-tetrahydrofolate.

Belongs to the thymidylate synthase family. Bacterial-type ThyA subfamily. In terms of assembly, homodimer.

It is found in the cytoplasm. It catalyses the reaction dUMP + (6R)-5,10-methylene-5,6,7,8-tetrahydrofolate = 7,8-dihydrofolate + dTMP. It functions in the pathway pyrimidine metabolism; dTTP biosynthesis. Its function is as follows. Catalyzes the reductive methylation of 2'-deoxyuridine-5'-monophosphate (dUMP) to 2'-deoxythymidine-5'-monophosphate (dTMP) while utilizing 5,10-methylenetetrahydrofolate (mTHF) as the methyl donor and reductant in the reaction, yielding dihydrofolate (DHF) as a by-product. This enzymatic reaction provides an intracellular de novo source of dTMP, an essential precursor for DNA biosynthesis. This chain is Thymidylate synthase, found in Cereibacter sphaeroides (strain ATCC 17023 / DSM 158 / JCM 6121 / CCUG 31486 / LMG 2827 / NBRC 12203 / NCIMB 8253 / ATH 2.4.1.) (Rhodobacter sphaeroides).